The primary structure comprises 1484 residues: Chromosome partition protein MukB (1484 aa).

34–41 contacts ATP; sequence GGNGAGKS. 3 coiled-coil regions span residues 326-418, 444-472, and 509-602; these read LEAD…QYNQ, LDTF…QTAH, and RHLA…QRAP. Residues 666–783 form a flexible hinge region; that stretch reads PGGAEDQRLN…SLPIFGRAAR (118 aa). Coiled coils occupy residues 835-923, 977-1116, and 1209-1265; these read EAEI…AKLE, EMLS…AKAG, and VEAI…LQSV. Positions 1049-1074 are disordered; sequence ADSGAEERARQRRDELHAQLSNNRSR. Basic and acidic residues predominate over residues 1051–1065; sequence SGAEERARQRRDELH.

The protein belongs to the SMC family. MukB subfamily. As to quaternary structure, homodimerization via its hinge domain. Binds to DNA via its C-terminal region. Interacts, and probably forms a ternary complex, with MukE and MukF via its C-terminal region. The complex formation is stimulated by calcium or magnesium. Interacts with tubulin-related protein FtsZ.

The protein resides in the cytoplasm. The protein localises to the nucleoid. Plays a central role in chromosome condensation, segregation and cell cycle progression. Functions as a homodimer, which is essential for chromosome partition. Involved in negative DNA supercoiling in vivo, and by this means organize and compact chromosomes. May achieve or facilitate chromosome segregation by condensation DNA from both sides of a centrally located replisome during cell division. This Salmonella dublin (strain CT_02021853) protein is Chromosome partition protein MukB.